The sequence spans 263 residues: Hydroxyethylthiazole kinase (263 aa).

M39 is a substrate binding site. The ATP site is built by K115 and T160. G187 is a substrate binding site.

This sequence belongs to the Thz kinase family. Mg(2+) serves as cofactor.

It catalyses the reaction 5-(2-hydroxyethyl)-4-methylthiazole + ATP = 4-methyl-5-(2-phosphooxyethyl)-thiazole + ADP + H(+). It participates in cofactor biosynthesis; thiamine diphosphate biosynthesis; 4-methyl-5-(2-phosphoethyl)-thiazole from 5-(2-hydroxyethyl)-4-methylthiazole: step 1/1. Its function is as follows. Catalyzes the phosphorylation of the hydroxyl group of 4-methyl-5-beta-hydroxyethylthiazole (THZ). This is Hydroxyethylthiazole kinase from Staphylococcus saprophyticus subsp. saprophyticus (strain ATCC 15305 / DSM 20229 / NCIMB 8711 / NCTC 7292 / S-41).